A 465-amino-acid polypeptide reads, in one-letter code: Mothers against decapentaplegic homolog 1 (465 aa).

Met1 is subject to N-acetylmethionine. One can recognise an MH1 domain in the interval 12 to 136 (PAVKRLLGWK…YKRVESPVLP (125 aa)). 4 residues coordinate Zn(2+): Cys64, Cys109, Cys121, and His126. A disordered region spans residues 162 to 249 (NEPHMPLNAT…QPMDTNMMAP (88 aa)). A compositionally biased stretch (low complexity) spans 179–210 (PNSHPFPHSPNSSYPNSPGSSSSTYPHSPTSS). Over residues 221 to 232 (DTPPPAYLPPED) the composition is skewed to pro residues. The MH2 domain occupies 271 to 465 (WCSIVYYELN…SPHNPISSVS (195 aa)). Phosphothreonine; by MINK1, TNIK and MAP4K4 is present on Thr322. The segment at 418 to 428 (KGWGAEYHRQD) is L3 loop. Phosphoserine is present on residues Ser463 and Ser465.

The protein belongs to the dwarfin/SMAD family. As to quaternary structure, found in a complex with SMAD4 and YY1. Interacts with HGS, NANOG and ZCCHC12. Upon C-terminus phosphorylation: forms trimers with another SMAD1 and the co-SMAD SMAD4. Interacts with PEBP2-alpha subunit, CREB-binding protein (CBP), p300, SMURF1, SMURF2, USP15 and HOXC8. Associates with ZNF423 or ZNF521 in response to BMP2 leading to activate transcription of BMP target genes. Interacts with SKOR1. Interacts (via MH2 domain) with LEMD3. Binding to LEMD3 results in at least a partial reduction of receptor-mediated phosphorylation. Forms a ternary complex with PSMB4 and OAZ1 before PSMB4 is incorporated into the 20S proteasome. Interacts (via MH2 domain) with FAM83G (via MH2 domain); in a SMAD4-independent manner. Interacts with ZC3H3. Interacts with TMEM119. Interacts (via MH1 and MH2 domains) with ZNF8. Interacts with RANBP3L; the interaction increases when SMAD1 is not phosphorylated and mediates SMAD1 nuclear export. Interacts with EGR1; this interaction inhibits SMAD1 dephosphorylation. Interacts with SMAD6. Interacts with YAP1. Interacts with MTMR4; negatively regulates BMP signaling through SMAD1 dephosphorylation and retention in endosomes. In terms of processing, phosphorylation of the C-terminal SVS motif by BMP type 1 receptor kinase activates SMAD1 by promoting dissociation from the receptor and trimerization with SMAD4. Phosphorylation by ERK2 MAP kinase in response to EGF or HGF prevents SMAD1 nuclear accumulation and transcriptional activity in response to BMP. Dephosphorylation, probably by PPM1A, induces its export from the nucleus to the cytoplasm. Dephosphorylation is inhibited by association with EGR1. Phosphorylation by CDK8/9 creates binding sites for YAP1, and subsequent phosphorylation by GSK3 switches off YAP1 binding and adds binding sites for SMURF1. Post-translationally, ubiquitinated by SMAD-specific E3 ubiquitin ligase SMURF1, leading to its degradation. Monoubiquitinated, leading to prevent DNA-binding. Deubiquitination by USP15 alleviates inhibition and promotes activation of TGF-beta target genes. Dephosphorylation, probably by PPM1A, induces its export from the nucleus to the cytoplasm. Phospho-SMAD1 is ubiquitinated by CHIP leading to disruption of the SMAD1-SMAD4 complex.

It is found in the cytoplasm. The protein localises to the nucleus. Functionally, transcriptional modulator that plays a role in various cellular processes, including embryonic development, cell differentiation, and tissue homeostasis. Upon BMP ligand binding to their receptors at the cell surface, is phosphorylated by activated type I BMP receptors (BMPRIs) and associates with SMAD4 to form an heteromeric complex which translocates into the nucleus acting as transcription factor. In turn, the hetero-trimeric complex recognizes cis-regulatory elements containing Smad Binding Elements (SBEs) to modulate the outcome of the signaling network. SMAD1/OAZ1/PSMB4 complex mediates the degradation of the CREBBP/EP300 repressor SNIP1. Positively regulates BMP4-induced expression of odontogenic development regulator MSX1 following IPO7-mediated nuclear import. This is Mothers against decapentaplegic homolog 1 (SMAD1) from Bos taurus (Bovine).